The sequence spans 611 residues: V-type proton ATPase catalytic subunit A (611 aa).

Residue Gly244–Thr251 coordinates ATP.

It belongs to the ATPase alpha/beta chains family. As to quaternary structure, V-ATPase is a heteromultimeric enzyme made up of two complexes: the ATP-hydrolytic V1 complex and the proton translocation V0 complex. The V1 complex consists of three catalytic AB heterodimers that form a heterohexamer, three peripheral stalks each consisting of EG heterodimers, one central rotor including subunits D and F, and the regulatory subunits C and H. The proton translocation complex V0 consists of the proton transport subunit a, a ring of proteolipid subunits c9c'', rotary subunit d and subunit e.

The protein localises to the cell membrane. It localises to the vacuole. Its subcellular location is the vesicle. The enzyme catalyses ATP + H2O + 4 H(+)(in) = ADP + phosphate + 5 H(+)(out). ATP hydrolysis occurs at the interface between the nucleotide-binding domains of subunits A and B. ATP hydrolysis triggers a conformational change in the subunits D and F, which induces a shift of subunit d. The c-ring is subsequently rotated and results in a continuous proton translocation across the membrane. Functionally, catalytic subunit of the V1 complex of vacuolar(H+)-ATPase (V-ATPase), a multisubunit enzyme composed of a peripheral complex (V1) that hydrolyzes ATP and a membrane integral complex (V0) that translocates protons. V-ATPase is responsible for acidifying and maintaining the pH of intracellular compartments and in some cell types, is targeted to the plasma membrane, where it is responsible for acidifying the extracellular environment. During the trophozoite stage, involved in the acidification of the extracellular space next to the cell membrane. The sequence is that of V-type proton ATPase catalytic subunit A from Plasmodium falciparum (isolate 3D7).